We begin with the raw amino-acid sequence, 479 residues long: UDP-N-acetylmuramoyl-L-alanyl-D-glutamate--2,6-diaminopimelate ligase (479 aa).

Ser-21 lines the UDP-N-acetyl-alpha-D-muramoyl-L-alanyl-D-glutamate pocket. 98–104 is a binding site for ATP; it reads GTNGKSS. Residues 144-145, Ser-171, Gln-177, and Arg-179 each bind UDP-N-acetyl-alpha-D-muramoyl-L-alanyl-D-glutamate; that span reads TT. The residue at position 211 (Lys-211) is an N6-carboxylysine. Residues Arg-372, 396-399, Gly-446, and Glu-450 each bind meso-2,6-diaminopimelate; that span reads DNPR. The Meso-diaminopimelate recognition motif signature appears at 396–399; sequence DNPR.

The protein belongs to the MurCDEF family. MurE subfamily. Mg(2+) serves as cofactor. Post-translationally, carboxylation is probably crucial for Mg(2+) binding and, consequently, for the gamma-phosphate positioning of ATP.

It localises to the cytoplasm. The enzyme catalyses UDP-N-acetyl-alpha-D-muramoyl-L-alanyl-D-glutamate + meso-2,6-diaminopimelate + ATP = UDP-N-acetyl-alpha-D-muramoyl-L-alanyl-gamma-D-glutamyl-meso-2,6-diaminopimelate + ADP + phosphate + H(+). Its pathway is cell wall biogenesis; peptidoglycan biosynthesis. Its function is as follows. Catalyzes the addition of meso-diaminopimelic acid to the nucleotide precursor UDP-N-acetylmuramoyl-L-alanyl-D-glutamate (UMAG) in the biosynthesis of bacterial cell-wall peptidoglycan. The protein is UDP-N-acetylmuramoyl-L-alanyl-D-glutamate--2,6-diaminopimelate ligase of Rickettsia rickettsii.